The primary structure comprises 255 residues: NAD kinase (255 aa).

Aspartate 44 (proton acceptor) is an active-site residue. NAD(+)-binding positions include aspartate 44–glycine 45, histidine 49, asparagine 114–glutamate 115, aspartate 144, alanine 152, serine 155–serine 160, and glutamine 216.

This sequence belongs to the NAD kinase family. The cofactor is a divalent metal cation.

The protein resides in the cytoplasm. It carries out the reaction NAD(+) + ATP = ADP + NADP(+) + H(+). Its function is as follows. Involved in the regulation of the intracellular balance of NAD and NADP, and is a key enzyme in the biosynthesis of NADP. Catalyzes specifically the phosphorylation on 2'-hydroxyl of the adenosine moiety of NAD to yield NADP. The protein is NAD kinase of Rickettsia bellii (strain OSU 85-389).